The primary structure comprises 154 residues: Transcriptional repressor NrdR (154 aa).

Residues 1 to 22 (MRCPFCAHDDSQVKDSRPTDDG) form a disordered region. Residues 3–34 (CPFCAHDDSQVKDSRPTDDGAAIRRRRQCEGC) fold into a zinc finger. The segment covering 7–22 (AHDDSQVKDSRPTDDG) has biased composition (basic and acidic residues). One can recognise an ATP-cone domain in the interval 49–139 (MTVVKSDGRR…VYKDFREAKD (91 aa)).

Belongs to the NrdR family. It depends on Zn(2+) as a cofactor.

Negatively regulates transcription of bacterial ribonucleotide reductase nrd genes and operons by binding to NrdR-boxes. This is Transcriptional repressor NrdR from Rhizorhabdus wittichii (strain DSM 6014 / CCUG 31198 / JCM 15750 / NBRC 105917 / EY 4224 / RW1) (Sphingomonas wittichii).